Here is a 163-residue protein sequence, read N- to C-terminus: Protein FAM167B (163 aa).

Residues 73–132 (FDSMDSALEWLRRELREMQAQDRQLAGQLLRLRAQLHRLKMDQACHLHQELLDEAELELE) are a coiled coil.

The protein belongs to the FAM167 (SEC) family.

This is Protein FAM167B (FAM167B) from Homo sapiens (Human).